The primary structure comprises 157 residues: Large ribosomal subunit protein uL11 (157 aa).

Belongs to the universal ribosomal protein uL11 family.

In terms of biological role, this protein binds directly to 26S ribosomal RNA. This is Large ribosomal subunit protein uL11 (RPL12) from Chlamydomonas reinhardtii (Chlamydomonas smithii).